The following is a 310-amino-acid chain: Ribosomal RNA small subunit methyltransferase H (310 aa).

S-adenosyl-L-methionine-binding positions include Gly-32–His-34, Asp-52, Ala-83, Asp-100, and Gln-107.

It belongs to the methyltransferase superfamily. RsmH family.

The protein resides in the cytoplasm. It carries out the reaction cytidine(1402) in 16S rRNA + S-adenosyl-L-methionine = N(4)-methylcytidine(1402) in 16S rRNA + S-adenosyl-L-homocysteine + H(+). Specifically methylates the N4 position of cytidine in position 1402 (C1402) of 16S rRNA. This is Ribosomal RNA small subunit methyltransferase H from Geobacillus sp. (strain WCH70).